The primary structure comprises 627 residues: MELGGPGAPRLLPPLLLLLGTGLLRASSHVETRAHAEERLLKKLFSGYNKWSRPVANISDVVLVRFGLSIAQLIDVDEKNQMMTTNVWVKQEWHDYKLRWDPADYENVTSIRIPSELIWRPDIVLYNNADGDFAVTHLTKAHLFHDGRVQWTPPAIYKSSCSIDVTFFPFDQQNCTMKFGSWTYDKAKIDLVNMHSRVDQLDFWESGEWVIVDAVGTYNTRKYECCAEIYPDITYAFVIRRLPLFYTINLIIPCLLISCLTVLVFYLPSECGEKITLCISVLLSLTVFLLLITEIIPSTSLVIPLIGEYLLFTMIFVTLSIVITVFVLNVHHRSPRTHTMPTWVRRVFLDIVPRLLLMKRPSVVKDNCRRLIESMHKMASAPRFWPEPEGEPPATSGTQSLHPPSPSFCIPLDVPAEPGPSCKSPSDQLPAQQPLEAEKASPHASPGPCRPPHGTQAPGLAKARSLSVQHMSSPGEAVEGGIRCRSRSIQYCVPRDDATSEAGGQAAGALASRNTHSAELPPPDRPSPCKCTCKKEPSSVSPSATVKARSTKAPPRHLPLSPALTRAVEGVQYIADHLKAEDTDFSVKEDWKYVAMVIDRIFLWMFIIVCLLGTVGLFLPPWLAGMI.

The signal sequence occupies residues 1-28 (MELGGPGAPRLLPPLLLLLGTGLLRASS). Residues 29-242 (HVETRAHAEE…ITYAFVIRRL (214 aa)) are Extracellular-facing. N-linked (GlcNAc...) asparagine glycosylation occurs at N57. Residues V76 and E78 each coordinate Ca(2+). N-linked (GlcNAc...) asparagine glycans are attached at residues N107 and N174. Disulfide bonds link C161–C175 and C225–C226. Residues 243–267 (PLFYTINLIIPCLLISCLTVLVFYL) form a helical membrane-spanning segment. C271 carries S-palmitoyl cysteine lipidation. 2 helical membrane-spanning segments follow: residues 275 to 293 (ITLC…LLIT) and 309 to 330 (YLLF…VLNV). Topologically, residues 331–600 (HHRSPRTHTM…WKYVAMVIDR (270 aa)) are cytoplasmic. 2 disordered regions span residues 382-479 (PRFW…EAVE) and 497-559 (DATS…RHLP). Residues S424, S538, and S541 each carry the phosphoserine modification. A helical transmembrane segment spans residues 601–619 (IFLWMFIIVCLLGTVGLFL).

It belongs to the ligand-gated ion channel (TC 1.A.9) family. Acetylcholine receptor (TC 1.A.9.1) subfamily. Alpha-4/CHRNA4 sub-subfamily. Neuronal AChR is composed of two different types of subunits: alpha and beta. CHRNA4 forms heteropentameric neuronal acetylcholine receptors with CHRNB2 and CHRNB4, as well as CHRNA5 and CHRNB3 as accesory subunits. Found in two major stoichiometric forms, LS (low agonist sensitivity): (CHRNA4)3:(CHRNB2)2 and HS (high agonist sensitivity): (CHRNA4)2:(CHRNB2)3, the two stoichiometric forms differ in their unitary conductance, calcium permeability, ACh sensitivity and potentiation by divalent cation. Cells produce predominantly an (CHRNA4)3:(CHRNB2)2 nAChR. The (CHRNA4)2:(CHRNB2)3 expression is selectively up-regulated by nicotine and has lower single channel conductance and calcium permeability. In the striatum, also forms CHRNA4:CHRNA6:CHRNB2 complexes. Also found in the stoichiometric form: (CHRNA4:CHRNB2)2:CHRNB3. Interacts with RIC3; which is required for proper folding and assembly. Interacts with LYPD6.

The protein localises to the synaptic cell membrane. The protein resides in the cell membrane. The enzyme catalyses Ca(2+)(in) = Ca(2+)(out). It carries out the reaction K(+)(in) = K(+)(out). The catalysed reaction is Na(+)(in) = Na(+)(out). With respect to regulation, activated by a myriad of ligands such as acetylcholine, cytisine, nicotine, choline and epibatidine. Channel potentiation by calcium is stoichiometry-selective, CHRNA4:CHRNB2 nACh receptor is achieved by calcium association with topographically distinct sites framed by anionic residues within the CHRNA4 subunit and between the CHRNA4 and CHRNB2 subunits. nAChR activity is inhibited by the antagonist alpha-conotoxins BuIA, PnIA, GID and MII, small disulfide-constrained peptides from cone snails. Its function is as follows. Component of neuronal acetylcholine receptors (nAChRs) that function as pentameric, ligand-gated cation channels with high calcium permeability among other activities. nAChRs are excitatory neurotrasnmitter receptors formed by a collection of nAChR subunits known to mediate synaptic transmission in the nervous system and the neuromuscular junction. Each nAchR subunit confers differential attributes to channel properties, including activation, deactivation and desensitization kinetics, pH sensitivity, cation permeability, and binding to allosteric modulators. CHRNA4 forms heteropentameric neuronal acetylcholine receptors with CHRNB2 and CHRNB4, as well as CHRNA5 and CHRNB3 as accesory subunits. Is the most abundant nAChR subtype expressed in the central nervous system. Found in two major stoichiometric forms,(CHRNA4)3:(CHRNB2)2 and (CHRNA4)2:(CHRNB2)3, the two stoichiometric forms differ in their unitary conductance, calcium permeability, ACh sensitivity and potentiation by divalent cation. Involved in the modulation of calcium-dependent signaling pathways, influences the release of neurotransmitters, including dopamine, glutamate and GABA. This Pan troglodytes (Chimpanzee) protein is Neuronal acetylcholine receptor subunit alpha-4 (CHRNA4).